Consider the following 324-residue polypeptide: D-alanine--D-alanine ligase (324 aa).

The ATP-grasp domain maps to 121–321; it reads NQYLKGFGIR…IKDVMTDIIE (201 aa). Residue 149–204 coordinates ATP; that stretch reads INKIGLPCFIKPNAGGSSFGVTKVKTKEDIQPAIEKAFEESDEVMIEAFMKGTEIT. 3 residues coordinate Mg(2+): Asp-275, Glu-288, and Asn-290.

The protein belongs to the D-alanine--D-alanine ligase family. Mg(2+) serves as cofactor. It depends on Mn(2+) as a cofactor.

It is found in the cytoplasm. The catalysed reaction is 2 D-alanine + ATP = D-alanyl-D-alanine + ADP + phosphate + H(+). The protein operates within cell wall biogenesis; peptidoglycan biosynthesis. Its function is as follows. Cell wall formation. The protein is D-alanine--D-alanine ligase of Phocaeicola vulgatus (strain ATCC 8482 / DSM 1447 / JCM 5826 / CCUG 4940 / NBRC 14291 / NCTC 11154) (Bacteroides vulgatus).